The primary structure comprises 341 residues: Serpentine receptor class beta-3 (341 aa).

Residues 1–23 (MLETNDSVCELAYQLAYHPVYRS) are Extracellular-facing. A glycan (N-linked (GlcNAc...) asparagine) is linked at asparagine 5. The helical transmembrane segment at 24 to 44 (SQFWSMLVSSLSIPALIYFIT) threads the bilayer. At 45–58 (RKIFFLHFHGNLKC) the chain is on the cytoplasmic side. The chain crosses the membrane as a helical span at residues 59–79 (LLIVYFICNLLFSMALCFAFF). Residues 80–103 (YQFLIPFFVTSKCQLLINTTLFKW) are Extracellular-facing. Residue asparagine 97 is glycosylated (N-linked (GlcNAc...) asparagine). The helical transmembrane segment at 104-124 (GQICSFLLLTSSMLLPIGFSI) threads the bilayer. Over 125-141 (ERFVALGNAQKYESSRT) the chain is Cytoplasmic. A helical membrane pass occupies residues 142–162 (FLGPVIIFIIIAVDFSIIFSV). Residues 163-187 (YKNEPFTEGFYSFILVPSTTASQIN) lie on the Extracellular side of the membrane. The chain crosses the membrane as a helical span at residues 188–208 (MYFFVLLFVKIFNLLLNCILL). The Cytoplasmic portion of the chain corresponds to 209 to 237 (RIHKKIRIKYYSLSVRYEMEEILQSSKFT). The helical transmembrane segment at 238–258 (FIIRFTHLLFFGFYVVVILFV) threads the bilayer. Residues 259–276 (RIMGESFFNGTLNYSVAR) are Extracellular-facing. N-linked (GlcNAc...) asparagine glycans are attached at residues asparagine 267 and asparagine 271. Residues 277–297 (GVFCTVPTYNLIIVIIGIKSL) form a helical membrane-spanning segment. Residues 298–341 (RHLNLQRLNKVQSTVQIKSTGKEGSKNYEDIITNYWDSVSSRTP) lie on the Cytoplasmic side of the membrane.

The protein belongs to the nematode receptor-like protein srb family. In terms of tissue distribution, expressed throughout the head.

Its subcellular location is the cell membrane. It is found in the perikaryon. It localises to the cell projection. The protein resides in the dendrite. G-protein coupled receptor. The sequence is that of Serpentine receptor class beta-3 from Caenorhabditis elegans.